The primary structure comprises 316 residues: Ribosomal protein L11 methyltransferase (316 aa).

S-adenosyl-L-methionine contacts are provided by Thr-157, Gly-178, Asp-200, and Asn-243.

Belongs to the methyltransferase superfamily. PrmA family.

It localises to the cytoplasm. The catalysed reaction is L-lysyl-[protein] + 3 S-adenosyl-L-methionine = N(6),N(6),N(6)-trimethyl-L-lysyl-[protein] + 3 S-adenosyl-L-homocysteine + 3 H(+). Functionally, methylates ribosomal protein L11. The polypeptide is Ribosomal protein L11 methyltransferase (Streptococcus pneumoniae (strain 70585)).